A 407-amino-acid polypeptide reads, in one-letter code: SERPINE1 mRNA-binding protein 1 (407 aa).

A Phosphoserine modification is found at S25. Residues 33 to 227 (AAENKKKEAG…GSGSHNWGTV (195 aa)) are disordered. Residues 51–68 (AKSAAQAAAQTNSNAAGK) show a composition bias toward low complexity. K52 is modified (N6-acetyllysine; alternate). K52 is covalently cross-linked (Glycyl lysine isopeptide (Lys-Gly) (interchain with G-Cter in SUMO1); alternate). Position 68 is an N6-acetyllysine (K68). Composition is skewed to basic and acidic residues over residues 70-80 (LRKESQKDRKN), 89-114 (VDKKEETQPPVALKKEGIRRVGRRPD), and 122-162 (KIID…DRPI). K102 is covalently cross-linked (Glycyl lysine isopeptide (Lys-Gly) (interchain with G-Cter in SUMO1); alternate). A Glycyl lysine isopeptide (Lys-Gly) (interchain with G-Cter in SUMO2) cross-link involves residue K102. K102 participates in a covalent cross-link: Glycyl lysine isopeptide (Lys-Gly) (interchain with G-Cter in SUMO2); alternate. 2 positions are modified to N6-acetyllysine: K122 and K140. Gly residues predominate over residues 164–182 (GRGGLGRGRGGRGRGMGRG). R165 and R188 each carry omega-N-methylarginine. Basic and acidic residues predominate over residues 183-199 (DGFDSRGKREFDRHSGS). Residues S197, S199, S203, S205, and S208 each carry the phosphoserine modification. K211 is subject to N6-acetyllysine; alternate. K211 participates in a covalent cross-link: Glycyl lysine isopeptide (Lys-Gly) (interchain with G-Cter in SUMO2); alternate. Position 216 is an omega-N-methylarginine (R216). Residue S221 is modified to Phosphoserine. At T226 the chain carries Phosphothreonine. K228 participates in a covalent cross-link: Glycyl lysine isopeptide (Lys-Gly) (interchain with G-Cter in SUMO1); alternate. A Glycyl lysine isopeptide (Lys-Gly) (interchain with G-Cter in SUMO2); alternate cross-link involves residue K228. S234 carries the phosphoserine modification. Residues 242 to 256 (ISYNCSDLDQSNVTE) are compositionally biased toward polar residues. Disordered stretches follow at residues 242 to 291 (ISYN…TLDE) and 327 to 407 (SKSE…PALA). A compositionally biased stretch (basic and acidic residues) spans 261 to 274 (GEEHPVADTENKEN). K280 participates in a covalent cross-link: Glycyl lysine isopeptide (Lys-Gly) (interchain with G-Cter in SUMO1); alternate. K280 participates in a covalent cross-link: Glycyl lysine isopeptide (Lys-Gly) (interchain with G-Cter in SUMO2). Residue K280 forms a Glycyl lysine isopeptide (Lys-Gly) (interchain with G-Cter in SUMO2); alternate linkage. Composition is skewed to basic and acidic residues over residues 281–291 (EEGPKEMTLDE) and 327–341 (SKSEEAHAEDSVMDH). At K328 the chain carries N6-acetyllysine. S329 carries the phosphoserine modification. Residues 362–371 (GRPGRGGRGG) are compositionally biased toward gly residues. An omega-N-methylarginine mark is found at R363, R366, and R369. Phosphoserine is present on residues S391 and S393.

The protein belongs to the SERBP1-HABP4 family. As to quaternary structure, associates with mature 80S ribosomes. Interacts with EEF2/eEF2; interaction sequesters EEF2/eEF2 at the A-site of the ribosome, thereby blocking the interaction sites of the mRNA-tRNA complex, promoting ribosome stabilization and hibernation. Interacts with SPIN1. Interacts with CHD3 and TDRD3. Interacts with ZDHHC17 (via ANK repeats). Post-translationally, phosphorylation by MTOR inhibits SERBP1 and relieves ribosome hibernation.

Functionally, ribosome-binding protein that promotes ribosome hibernation, a process during which ribosomes are stabilized in an inactive state and preserved from proteasomal degradation. Acts via its association with EEF2/eEF2 factor, sequestering EEF2/eEF2 at the A-site of the ribosome and promoting ribosome stabilization and storage in an inactive state. May also play a role in the regulation of mRNA stability: binds to the 3'-most 134 nt of the SERPINE1/PAI1 mRNA, a region which confers cyclic nucleotide regulation of message decay. Seems to play a role in PML-nuclear bodies formation. This Oryctolagus cuniculus (Rabbit) protein is SERPINE1 mRNA-binding protein 1.